Consider the following 199-residue polypeptide: Probable chemoreceptor glutamine deamidase CheD (199 aa).

This sequence belongs to the CheD family.

It carries out the reaction L-glutaminyl-[protein] + H2O = L-glutamyl-[protein] + NH4(+). Functionally, probably deamidates glutamine residues to glutamate on methyl-accepting chemotaxis receptors (MCPs), playing an important role in chemotaxis. The polypeptide is Probable chemoreceptor glutamine deamidase CheD (Cereibacter sphaeroides (Rhodobacter sphaeroides)).